A 157-amino-acid chain; its full sequence is MKTEARDGGSEWRWVAIFELFLRLAAIVSTSVAVYAAMGKIFVVAVNGVACFYLLMSLPVSIFNIMRPHAYPANRVFLNIMDMVMVALVTAGALAAGIVYLVEKAGNARASWVSVWSQFDSSSCFAVLALILHVLLSGVILYKQALNIKFKKLDSVD.

At 1–13 (MKTEARDGGSEWR) the chain is on the cytoplasmic side. The helical transmembrane segment at 14 to 34 (WVAIFELFLRLAAIVSTSVAV) threads the bilayer. The Extracellular portion of the chain corresponds to 35–40 (YAAMGK). The chain crosses the membrane as a helical span at residues 41–61 (IFVVAVNGVACFYLLMSLPVS). Topologically, residues 62 to 82 (IFNIMRPHAYPANRVFLNIMD) are cytoplasmic. The helical transmembrane segment at 83 to 103 (MVMVALVTAGALAAGIVYLVE) threads the bilayer. The Extracellular portion of the chain corresponds to 104 to 121 (KAGNARASWVSVWSQFDS). A helical transmembrane segment spans residues 122–142 (SSCFAVLALILHVLLSGVILY). At 143 to 157 (KQALNIKFKKLDSVD) the chain is on the cytoplasmic side.

This sequence belongs to the Casparian strip membrane proteins (CASP) family. As to quaternary structure, homodimer and heterodimers.

The protein localises to the cell membrane. In Picea sitchensis (Sitka spruce), this protein is CASP-like protein 1.